Reading from the N-terminus, the 241-residue chain is MARPDGRLPDHLRPVTLTRGWSTHPEGSVLVEFGATRVLCTASVTEGVPRWRKGSGLGWVTAEYAMLPRATNTRSDRESVKGRVGGRTHEISRLIGRSLRASIDLKALGENSVVLDCDVLQADGGTRTAAITGAYVALYDAVTWLAARRSLAGRPENVMHRSVAAVSVGVVAGEPRLDLNYDEDATAEVDLNVVCTGTGDFVEVQGTGEAGVFSRGQLDALLDLAVAGCLDLAEAQRKALS.

Phosphate is bound by residues R87 and 125-127 (GTR).

Belongs to the RNase PH family. As to quaternary structure, homohexameric ring arranged as a trimer of dimers.

The catalysed reaction is tRNA(n+1) + phosphate = tRNA(n) + a ribonucleoside 5'-diphosphate. Phosphorolytic 3'-5' exoribonuclease that plays an important role in tRNA 3'-end maturation. Removes nucleotide residues following the 3'-CCA terminus of tRNAs; can also add nucleotides to the ends of RNA molecules by using nucleoside diphosphates as substrates, but this may not be physiologically important. Probably plays a role in initiation of 16S rRNA degradation (leading to ribosome degradation) during starvation. In Salinispora arenicola (strain CNS-205), this protein is Ribonuclease PH.